A 175-amino-acid polypeptide reads, in one-letter code: DDB1- and CUL4-associated factor 16 (175 aa).

Residues 1-42 (MGPRNPSPDPLSESESEEEENTNYLNESSGEEWDSSEEEDPV) are disordered. 2 stretches are compositionally biased toward acidic residues: residues 12 to 21 (SESESEEEEN) and 29 to 41 (SGEEWDSSEEEDP). An N6-acetyllysine modification is found at Lys-61.

In terms of assembly, interacts with DDB1 and CUL4A.

The protein resides in the nucleus. It participates in protein modification; protein ubiquitination. Functions as a substrate recognition component for CUL4-DDB1 E3 ubiquitin-protein ligase complex, which mediates ubiquitination and proteasome-dependent degradation of nuclear proteins. The polypeptide is DDB1- and CUL4-associated factor 16 (DCAF16) (Bos taurus (Bovine)).